The following is a 484-amino-acid chain: Aldehyde dehydrogenase family 3 member A2 (484 aa).

The Cytoplasmic segment spans residues 1-463; that stretch reads MERQVQRLRQ…FLLKQFNKGR (463 aa). NAD(+) is bound at residue 185 to 190; sequence GNTAVG. Active-site residues include Glu207 and Cys241. The residue at position 293 (Ser293) is a Phosphoserine. A helical transmembrane segment spans residues 464–484; that stretch reads LQLLLLVCLVAVAAVIVKDQL. A Prevents secretion from ER motif is present at residues 481–484; sequence KDQL.

This sequence belongs to the aldehyde dehydrogenase family. Homodimer. Post-translationally, the N-terminus is blocked.

The protein localises to the microsome membrane. It localises to the endoplasmic reticulum membrane. The enzyme catalyses an aldehyde + NAD(+) + H2O = a carboxylate + NADH + 2 H(+). The catalysed reaction is a fatty aldehyde + NAD(+) + H2O = a fatty acid + NADH + 2 H(+). It catalyses the reaction (2E)-hexadecenal + NAD(+) + H2O = (E)-hexadec-2-enoate + NADH + 2 H(+). It carries out the reaction hexadecanoate + NADH + 2 H(+) = hexadecanal + NAD(+) + H2O. The enzyme catalyses 22-oxodocosanoate + NAD(+) + H2O = docosanedioate + NADH + 2 H(+). The catalysed reaction is 2,6,10,14-tetramethylpentadecanal + NAD(+) + H2O = 2,6,10,14-tetramethylpentadecanoate + NADH + 2 H(+). It catalyses the reaction octadecanal + NAD(+) + H2O = octadecanoate + NADH + 2 H(+). It carries out the reaction dodecanoate + NADH + 2 H(+) = dodecanal + NAD(+) + H2O. The enzyme catalyses decanal + NAD(+) + H2O = decanoate + NADH + 2 H(+). The catalysed reaction is tetradecanal + NAD(+) + H2O = tetradecanoate + NADH + 2 H(+). It catalyses the reaction octanal + NAD(+) + H2O = octanoate + NADH + 2 H(+). It carries out the reaction heptanal + NAD(+) + H2O = heptanoate + NADH + 2 H(+). The enzyme catalyses (2E,6E)-farnesal + NAD(+) + H2O = (2E,6E)-farnesoate + NADH + 2 H(+). In terms of biological role, catalyzes the oxidation of medium and long-chain aliphatic aldehydes to fatty acids. Active on a variety of saturated and unsaturated aliphatic aldehydes between 6 and 24 carbons in length. Responsible for conversion of the sphingosine 1-phosphate (S1P) degradation product hexadecenal to hexadecenoic acid. This is Aldehyde dehydrogenase family 3 member A2 (Aldh3a2) from Rattus norvegicus (Rat).